Consider the following 250-residue polypeptide: Low affinity immunoglobulin gamma Fc region receptor III-A (250 aa).

An N-terminal signal peptide occupies residues 1-16; the sequence is MWQLLPPAALLLLVSA. Residues 17–208 lie on the Extracellular side of the membrane; sequence DTQTADPSKA…VSSFFLPWHQ (192 aa). 2 consecutive Ig-like C2-type domains span residues 23-105 and 99-189; these read PSKA…LEVH and PVKL…VQIT. 2 cysteine pairs are disulfide-bonded: Cys47–Cys89 and Cys128–Cys172. N-linked (GlcNAc...) asparagine glycans are attached at residues Asn56 and Asn63. Residue Asn180 is glycosylated (N-linked (GlcNAc...) asparagine). A helical transmembrane segment spans residues 209-225; sequence ITFCLVMGVLFAVDTGL. At 226 to 250 the chain is on the cytoplasmic side; sequence YFSVRRHLQSSEEWRDGKVTWSKGP.

In terms of assembly, forms a heterooligomeric complex with ITAM-containing signaling subunits FCER1G. Interacts (via transmembrane domain) with signaling subunits; this interaction is a prerequisite for receptor complex expression on the cell surface and intracellular signal transduction. Binds the Fc region of antigen-complexed IgG. Expressed in gamma-delta T cells.

It localises to the cell membrane. Functionally, receptor for the invariable Fc fragment of immunoglobulin gamma (IgG). Optimally activated upon binding of clustered antigen-IgG complexes displayed on cell surfaces, triggers lysis of antibody-coated cells, a process known as antibody-dependent cellular cytotoxicity (ADCC). Does not bind free monomeric IgG, thus avoiding inappropriate effector cell activation in the absence of antigenic trigger. Mediates IgG effector functions on natural killer (NK) cells. Binds antigen-IgG complexes generated upon infection and triggers NK cell-dependent cytokine production and degranulation to limit viral load and propagation. Fc-binding subunit that associates with FCER1G adapters to form functional signaling complexes. Following the engagement of antigen-IgG complexes, triggers phosphorylation of immunoreceptor tyrosine-based activation motif (ITAM)-containing adapter with subsequent activation of phosphatidylinositol 3-kinase signaling and sustained elevation of intracellular calcium that ultimately drive NK cell activation. Mediates enhanced ADCC in response to afucosylated IgGs. This chain is Low affinity immunoglobulin gamma Fc region receptor III-A, found in Bos taurus (Bovine).